Consider the following 368-residue polypeptide: Phospho-N-acetylmuramoyl-pentapeptide-transferase (368 aa).

A run of 10 helical transmembrane segments spans residues 32 to 52 (TGGAMVTGALFVFLFGPWIID), 79 to 99 (TPTMGGLMILSGLVVSTVLWA), 102 to 122 (LNPYVWIVLAVTLGFGFIGFY), 140 to 160 (TRLLLELLIALAACYALIRLG), 176 to 196 (VVVDLGWFFLAFGAFIIVGAG), 207 to 227 (GLAIVPVMIAAASFGMIAYLA), 247 to 267 (LAVLCGAVLGAGLGFLWFNAP), 271 to 291 (IFMGDTGSLALGGMLGSIAVA), 296 to 316 (IVLAVIGGLFVLEAVSVIVQV), and 345 to 365 (QIVIRFWIISVMLALAGLSTL).

This sequence belongs to the glycosyltransferase 4 family. MraY subfamily. It depends on Mg(2+) as a cofactor.

The protein localises to the cell inner membrane. It catalyses the reaction UDP-N-acetyl-alpha-D-muramoyl-L-alanyl-gamma-D-glutamyl-meso-2,6-diaminopimeloyl-D-alanyl-D-alanine + di-trans,octa-cis-undecaprenyl phosphate = di-trans,octa-cis-undecaprenyl diphospho-N-acetyl-alpha-D-muramoyl-L-alanyl-D-glutamyl-meso-2,6-diaminopimeloyl-D-alanyl-D-alanine + UMP. It participates in cell wall biogenesis; peptidoglycan biosynthesis. In terms of biological role, catalyzes the initial step of the lipid cycle reactions in the biosynthesis of the cell wall peptidoglycan: transfers peptidoglycan precursor phospho-MurNAc-pentapeptide from UDP-MurNAc-pentapeptide onto the lipid carrier undecaprenyl phosphate, yielding undecaprenyl-pyrophosphoryl-MurNAc-pentapeptide, known as lipid I. The chain is Phospho-N-acetylmuramoyl-pentapeptide-transferase from Nitrobacter hamburgensis (strain DSM 10229 / NCIMB 13809 / X14).